The primary structure comprises 391 residues: NADH-quinone oxidoreductase subunit D (391 aa).

It belongs to the complex I 49 kDa subunit family. As to quaternary structure, NDH-1 is composed of 14 different subunits. Subunits NuoB, C, D, E, F, and G constitute the peripheral sector of the complex.

The protein localises to the cell inner membrane. The catalysed reaction is a quinone + NADH + 5 H(+)(in) = a quinol + NAD(+) + 4 H(+)(out). Functionally, NDH-1 shuttles electrons from NADH, via FMN and iron-sulfur (Fe-S) centers, to quinones in the respiratory chain. The immediate electron acceptor for the enzyme in this species is believed to be ubiquinone. Couples the redox reaction to proton translocation (for every two electrons transferred, four hydrogen ions are translocated across the cytoplasmic membrane), and thus conserves the redox energy in a proton gradient. This chain is NADH-quinone oxidoreductase subunit D, found in Rickettsia rickettsii (strain Sheila Smith).